Consider the following 313-residue polypeptide: Olfactory receptor 56A4 (313 aa).

Residues 1 to 28 are Extracellular-facing; sequence MASPSNDSTAPVSEFLLICFPNFQSWQH. Asparagine 6 carries N-linked (GlcNAc...) asparagine glycosylation. A helical membrane pass occupies residues 29 to 49; the sequence is WLSLPLSLLFLLAMGANTTLL. Residues 50–57 lie on the Cytoplasmic side of the membrane; that stretch reads ITIQLEAS. The chain crosses the membrane as a helical span at residues 58-78; it reads LHQPLYYLLSLLSLLDIVLCL. The Extracellular segment spans residues 79-102; sequence TVIPKVLAIFWFDLRSISFPACFL. Cysteines 100 and 192 form a disulfide. Residues 103–123 form a helical membrane-spanning segment; it reads QMFIMNSFLTMESCTFMVMAY. Topologically, residues 124-142 are cytoplasmic; the sequence is DRYVAICHPLRYPSIITDQ. The helical transmembrane segment at 143–163 threads the bilayer; it reads FVARAVVFVIARNAFVSLPVP. Residues 164–199 lie on the Extracellular side of the membrane; it reads MLSARLRYCAGNIIKNCICSNLSVSKLSCDDITFNQ. The N-linked (GlcNAc...) asparagine glycan is linked to asparagine 184. The chain crosses the membrane as a helical span at residues 200–220; it reads LYQFVAGWTLLGSDLILIVIS. Residues 221–240 are Cytoplasmic-facing; that stretch reads YSFILKVVLRIKAEGAVAKA. The helical transmembrane segment at 241–261 threads the bilayer; that stretch reads LSTCGSHFILILFFSTVLLVL. Residues 262 to 276 lie on the Extracellular side of the membrane; it reads VITNLARKRIPPDVP. The chain crosses the membrane as a helical span at residues 277-297; the sequence is ILLNILHHLIPPALNPIVYGV. At 298-313 the chain is on the cytoplasmic side; sequence RTKEIKQGIQNLLKRL.

The protein belongs to the G-protein coupled receptor 1 family.

The protein localises to the cell membrane. Odorant receptor. This chain is Olfactory receptor 56A4 (OR56A4), found in Homo sapiens (Human).